The primary structure comprises 515 residues: Cyclic AMP receptor-like protein G (515 aa).

The Extracellular segment spans residues 1 to 16 (MSSIIFIPNDADNINS). Residues 17-37 (IMVTISSSLSLVGCLFILSIY) form a helical membrane-spanning segment. Topologically, residues 38–50 (IYYKELREFQLKL) are cytoplasmic. A helical membrane pass occupies residues 51–71 (IFIMTINDFIISIIFLIATHI). Residues 72-92 (QTKYFDAITNVFPFFCNFPDS) lie on the Extracellular side of the membrane. A helical transmembrane segment spans residues 93–113 (LLHYFFLSSFFWEVCIAHTLI). The Cytoplasmic segment spans residues 114-129 (QVIKYNNDKVEDNLKK). Residues 130–150 (YFIFSNGLSALIMVSLFFIRS) traverse the membrane as a helical segment. Residues 151-164 (YSKIDCHHDSIFPH) lie on the Extracellular side of the membrane. Residues 165 to 185 (LLFFIPLLLTWIYNIIVCALL) traverse the membrane as a helical segment. The Cytoplasmic segment spans residues 186–276 (TKTFKEQAMN…IRKTPNIIWT (91 aa)). A helical membrane pass occupies residues 277–297 (SIFFLFSFGFIWSWSILVIIL). The Extracellular segment spans residues 298–306 (KYLSLDVKY). The helical transmembrane segment at 307-327 (ILMISYFFIPLHGCMNAVCFG) threads the bilayer. At 328–515 (VNDRLRMNLK…FCTIDEDETK (188 aa)) the chain is on the cytoplasmic side. The segment covering 362–375 (NGNNKNNKNNNGAN) has biased composition (low complexity). 2 disordered regions span residues 362–409 (NGNN…YYQI) and 469–515 (NNNN…DETK). Residues 385–396 (SPDDDDDEDDDN) are compositionally biased toward acidic residues. Low complexity-rich tracts occupy residues 397-407 (NNNNYSDGNYY) and 469-504 (NNNNNNNNNNNNNNNNNNNNNNINNNDNNNNNNNNN).

Belongs to the G-protein coupled receptor 5 family.

It localises to the membrane. Its function is as follows. Receptor for cAMP. This Dictyostelium discoideum (Social amoeba) protein is Cyclic AMP receptor-like protein G (crlG).